The chain runs to 34 residues: Jingzhaotoxin F7-10.36 (34 aa).

Cystine bridges form between C2/C17, C9/C22, and C16/C29.

Belongs to the neurotoxin 10 (Hwtx-1) family. 50 (Jztz-F7) subfamily. In terms of tissue distribution, expressed by the venom gland.

It localises to the secreted. Functionally, probable ion channel inhibitor. This chain is Jingzhaotoxin F7-10.36, found in Chilobrachys guangxiensis (Chinese earth tiger tarantula).